The sequence spans 160 residues: Serine-protein kinase RsbW (160 aa).

This sequence belongs to the anti-sigma-factor family.

It carries out the reaction L-seryl-[protein] + ATP = O-phospho-L-seryl-[protein] + ADP + H(+). It catalyses the reaction L-threonyl-[protein] + ATP = O-phospho-L-threonyl-[protein] + ADP + H(+). Its function is as follows. Negative regulator of sigma-B activity. Phosphorylates and inactivates its specific antagonist protein, RsbV. Upon phosphorylation of RsbV, RsbW is released and binds to sigma-B, thereby blocking its ability to form an RNA polymerase holoenzyme (E-sigma-B). The chain is Serine-protein kinase RsbW from Bacillus velezensis (strain DSM 23117 / BGSC 10A6 / LMG 26770 / FZB42) (Bacillus amyloliquefaciens subsp. plantarum).